A 296-amino-acid polypeptide reads, in one-letter code: tRNA dimethylallyltransferase (296 aa).

2-9 (GPTASGKT) serves as a coordination point for ATP. Position 4–9 (4–9 (TASGKT)) interacts with substrate. 3 interaction with substrate tRNA regions span residues 27–30 (DSAL), 151–155 (QRLSR), and 232–237 (RCVGYR).

Belongs to the IPP transferase family. Monomer. Requires Mg(2+) as cofactor.

The catalysed reaction is adenosine(37) in tRNA + dimethylallyl diphosphate = N(6)-dimethylallyladenosine(37) in tRNA + diphosphate. Catalyzes the transfer of a dimethylallyl group onto the adenine at position 37 in tRNAs that read codons beginning with uridine, leading to the formation of N6-(dimethylallyl)adenosine (i(6)A). The polypeptide is tRNA dimethylallyltransferase (Shewanella sp. (strain MR-7)).